The following is an 889-amino-acid chain: Alanine--tRNA ligase (889 aa).

Zn(2+) is bound by residues histidine 564, histidine 568, cysteine 671, and histidine 675.

It belongs to the class-II aminoacyl-tRNA synthetase family. Zn(2+) is required as a cofactor.

It localises to the cytoplasm. The enzyme catalyses tRNA(Ala) + L-alanine + ATP = L-alanyl-tRNA(Ala) + AMP + diphosphate. In terms of biological role, catalyzes the attachment of alanine to tRNA(Ala) in a two-step reaction: alanine is first activated by ATP to form Ala-AMP and then transferred to the acceptor end of tRNA(Ala). Also edits incorrectly charged Ser-tRNA(Ala) and Gly-tRNA(Ala) via its editing domain. The chain is Alanine--tRNA ligase from Pelagibacter ubique (strain HTCC1062).